The following is a 959-amino-acid chain: ATP-dependent 6-phosphofructokinase subunit beta (959 aa).

Residues T2 to S573 form an N-terminal catalytic PFK domain 1 region. Residues K144–S167 form a disordered region. At T152 the chain carries Phosphothreonine. The span at E158–S167 shows a compositional bias: low complexity. 2 positions are modified to phosphoserine: S163 and S171. Residues G206, R270 to C271, and G300 to S303 contribute to the ATP site. D301 contributes to the Mg(2+) binding site. Beta-D-fructose 6-phosphate-binding positions include S346 to D348, R383, M390 to R392, E447, R475, and H481 to R484. The Proton acceptor role is filled by D348. The tract at residues A574–L587 is interdomain linker. Residues K588–D959 are C-terminal regulatory PFK domain 2. Beta-D-fructose 2,6-bisphosphate is bound by residues R658, T716–N720, R754, and Q761–G763. S803 is modified (phosphoserine). Residues K847, H853–Q856, and R935 contribute to the beta-D-fructose 2,6-bisphosphate site.

This sequence belongs to the phosphofructokinase type A (PFKA) family. ATP-dependent PFK group I subfamily. Eukaryotic two domain clade 'E' sub-subfamily. In terms of assembly, heterooctamer of 4 alpha and 4 beta chains. Mg(2+) is required as a cofactor.

It localises to the cytoplasm. It is found in the mitochondrion outer membrane. The catalysed reaction is beta-D-fructose 6-phosphate + ATP = beta-D-fructose 1,6-bisphosphate + ADP + H(+). It functions in the pathway carbohydrate degradation; glycolysis; D-glyceraldehyde 3-phosphate and glycerone phosphate from D-glucose: step 3/4. With respect to regulation, allosterically activated by ADP, AMP, or fructose 2,6-bisphosphate, and allosterically inhibited by ATP or citrate. Catalyzes the phosphorylation of D-fructose 6-phosphate to fructose 1,6-bisphosphate by ATP, the first committing step of glycolysis. This Saccharomyces cerevisiae (strain ATCC 204508 / S288c) (Baker's yeast) protein is ATP-dependent 6-phosphofructokinase subunit beta (PFK2).